Consider the following 480-residue polypeptide: Glutamate--tRNA ligase (480 aa).

Positions P9–T19 match the 'HIGH' region motif. Residues K247–R251 carry the 'KMSKS' region motif. K250 contacts ATP.

Belongs to the class-I aminoacyl-tRNA synthetase family. Glutamate--tRNA ligase type 1 subfamily. As to quaternary structure, monomer.

It is found in the cytoplasm. The catalysed reaction is tRNA(Glu) + L-glutamate + ATP = L-glutamyl-tRNA(Glu) + AMP + diphosphate. Its function is as follows. Catalyzes the attachment of glutamate to tRNA(Glu) in a two-step reaction: glutamate is first activated by ATP to form Glu-AMP and then transferred to the acceptor end of tRNA(Glu). The chain is Glutamate--tRNA ligase from Nostoc sp. (strain PCC 7120 / SAG 25.82 / UTEX 2576).